A 382-amino-acid chain; its full sequence is Galactokinase (382 aa).

34–37 (EHTD) lines the substrate pocket. 124 to 130 (GAGLSSS) provides a ligand contact to ATP. Residues Ser-130 and Glu-162 each coordinate Mg(2+). The Proton acceptor role is filled by Asp-174. Tyr-223 provides a ligand contact to substrate.

The protein belongs to the GHMP kinase family. GalK subfamily.

It localises to the cytoplasm. It catalyses the reaction alpha-D-galactose + ATP = alpha-D-galactose 1-phosphate + ADP + H(+). Its pathway is carbohydrate metabolism; galactose metabolism. Functionally, catalyzes the transfer of the gamma-phosphate of ATP to D-galactose to form alpha-D-galactose-1-phosphate (Gal-1-P). The chain is Galactokinase from Escherichia coli (strain SMS-3-5 / SECEC).